A 177-amino-acid chain; its full sequence is Interleukin-25 (177 aa).

Positions 1 to 32 are cleaved as a signal peptide; sequence MRERPRLGEDSSLISLFLQVVAFLAMVMGTHT. The interval 58–81 is disordered; it reads PVPPLEPARPNRHPESCRASEDGP. The span at 69 to 78 shows a compositional bias: basic and acidic residues; it reads RHPESCRASE. 2 disulfides stabilise this stretch: Cys-110-Cys-168 and Cys-115-Cys-170. Asn-136 carries an N-linked (GlcNAc...) asparagine glycan.

It belongs to the IL-17 family. As to expression, expressed at low levels in several tissues, including brain, kidney, lung, prostate, testis, spinal cord, adrenal gland, and trachea.

The protein localises to the secreted. Functionally, cytokine produced by various cells such as eosinophils, T-helper type 2 (Th2) cells or epithelial cells that plays a role in internal safety of adaptive immune responses by regulating cytokine production. Promotes and augments T-helper type 2 responses locally or systemically. Exerts its activity via its receptor composed of IL17RA and IL17RB for signal transduction. In turn, stimulates the JAK2-STAT5A pathway and promotes the secretion of type-2 associated cytokines including IL4, IL9 and IL13. Also induces the release of IL8, and IL6 from eosinophils through the combined activation of MAPK and NF-kappa-B pathways. Inhibits the differentiation of T-helper (Th17) cells via the production of IL4, IL5 and IL13. The polypeptide is Interleukin-25 (IL25) (Homo sapiens (Human)).